The following is a 39-amino-acid chain: Histone H2A (39 aa).

Residues 1-18 are compositionally biased toward basic residues; sequence AGRGKQGGKVRAKAKTRS. Residues 1–24 are disordered; the sequence is AGRGKQGGKVRAKAKTRSSRAGLQ. N6-(2-hydroxyisobutyryl)lysine is present on K5. At K5 the chain carries N6-acetyllysine. The residue at position 9 (K9) is an N6-(2-hydroxyisobutyryl)lysine; alternate. N6-lactoyllysine; alternate is present on K9. The residue at position 9 (K9) is an N6-succinyllysine. Residues K13 and K15 each participate in a glycyl lysine isopeptide (Lys-Gly) (interchain with G-Cter in ubiquitin) cross-link. K36 bears the N6-(2-hydroxyisobutyryl)lysine; alternate mark.

It belongs to the histone H2A family. As to quaternary structure, the nucleosome is a histone octamer containing two molecules each of H2A, H2B, H3 and H4 assembled in one H3-H4 heterotetramer and two H2A-H2B heterodimers. The octamer wraps approximately 147 bp of DNA. Post-translationally, monoubiquitination of C-terminus gives a specific tag for epigenetic transcriptional repression. Following DNA double-strand breaks (DSBs), it is ubiquitinated through 'Lys-63' linkage of ubiquitin moieties.

It is found in the nucleus. The protein resides in the chromosome. In terms of biological role, core component of nucleosome. Nucleosomes wrap and compact DNA into chromatin, limiting DNA accessibility to the cellular machineries which require DNA as a template. Histones thereby play a central role in transcription regulation, DNA repair, DNA replication and chromosomal stability. DNA accessibility is regulated via a complex set of post-translational modifications of histones, also called histone code, and nucleosome remodeling. Buforins are strong antimicrobial activities in vitro against a broad-spectrum of microorganisms including fungi. Buforin II is more potent than buforin I. The chain is Histone H2A from Bufo gargarizans (Asian toad).